We begin with the raw amino-acid sequence, 170 residues long: Calcineurin subunit B type 1 (170 aa).

G2 carries N-myristoyl glycine lipidation. EF-hand domains lie at 18–46, 50–85, 87–122, and 128–163; these read DEIK…FMSL, QQNP…FSVK, DKEQ…MVGN, and QLQQ…LDIH. D31, D33, S35, S37, E42, D63, D65, N67, E69, E74, D100, D102, D104, Y106, and E111 together coordinate Ca(2+). Phosphotyrosine is present on Y106. A calcineurin A binding region spans residues 131 to 136; sequence QIVDKT. 5 residues coordinate Ca(2+): D141, D143, D145, R147, and E152.

The protein belongs to the calcineurin regulatory subunit family. Forms a complex composed of a calmodulin-dependent catalytic subunit (also known as calcineurin A) and a regulatory Ca(2+)-binding subunit (also known as calcineurin B). There are three catalytic subunits, each encoded by a separate gene (PPP3CA, PPP3CB, and PPP3CC) and two regulatory subunits which are also encoded by separate genes (PPP3R1 and PPP3R2). The interaction between the 2 subunits is Ca(2+)-independent. Interacts with catalytic subunit PPP3CA/calcineurin A. Interacts with catalytic subunit PPP3CB/calcineurin A. Interacts with CIB1 (via C-terminal region); the interaction increases upon cardiomyocyte hypertrophy. Interacts with RCAN1. Interacts with SPATA33 (via PQIIIT motif).

Its subcellular location is the cytoplasm. The protein localises to the cytosol. It localises to the cell membrane. The protein resides in the sarcolemma. In terms of biological role, regulatory subunit of calcineurin, a calcium-dependent, calmodulin stimulated protein phosphatase. Confers calcium sensitivity. The chain is Calcineurin subunit B type 1 (PPP3R1) from Bos taurus (Bovine).